Reading from the N-terminus, the 399-residue chain is MNIKTLTVSEVTNYIKRMLDNDFILSNLSVKGEISNLKYHSSGHIYFTLKDSSGRINCVMFKSNAVLLDFPLEEGMEVIIKGRASIYPATGSFQLYCDEIRKEGLGDLFIKFEKLKEKLSKEGYFDEAYKKELPKYPQRIGIVTSPTGAAIRDIINVSTRRSSLVDVVLYPAKVQGSGAYKDIISGINYFNRKKSVDIIIVGRGGGSIEELWNFNEEELAKAIFNSKIPIISAVGHEIDFTICDFVADVRAATPSQGAEIAVPLSDNIKDRLLDISKNLDKYISDRLDTCRNNLSGAQRILKVHSPMAKISNSYLEVDRLQDRLNFAMRTKIKGEKNKVENLNNLLFAHNPIKVISKGYAIIKDNENNIITSKEQLNEDKNIEVILKDGNIEGKFIPSK.

The protein belongs to the XseA family. Heterooligomer composed of large and small subunits.

The protein resides in the cytoplasm. The enzyme catalyses Exonucleolytic cleavage in either 5'- to 3'- or 3'- to 5'-direction to yield nucleoside 5'-phosphates.. Functionally, bidirectionally degrades single-stranded DNA into large acid-insoluble oligonucleotides, which are then degraded further into small acid-soluble oligonucleotides. The polypeptide is Exodeoxyribonuclease 7 large subunit (Clostridium beijerinckii (strain ATCC 51743 / NCIMB 8052) (Clostridium acetobutylicum)).